Here is a 356-residue protein sequence, read N- to C-terminus: Ion-translocating oxidoreductase complex subunit D (356 aa).

4 consecutive transmembrane segments (helical) span residues 20–40 (LMLL…WFFG), 42–62 (GVLV…ALAI), 68–88 (PVGF…IGVS), and 117–137 (GFNP…SFPV). Position 177 is an FMN phosphoryl threonine (threonine 177). 5 helical membrane passes run 205–225 (WASA…LYLL), 229–249 (VYTW…AALF), 259–279 (GSPL…FIVT), 292–312 (VIYG…GSSY), and 315–335 (GVAF…YYTT).

Belongs to the NqrB/RnfD family. The complex is composed of six subunits: RnfA, RnfB, RnfC, RnfD, RnfE and RnfG. FMN serves as cofactor.

The protein localises to the cell inner membrane. Part of a membrane-bound complex that couples electron transfer with translocation of ions across the membrane. The chain is Ion-translocating oxidoreductase complex subunit D from Cellvibrio japonicus (strain Ueda107) (Pseudomonas fluorescens subsp. cellulosa).